A 541-amino-acid polypeptide reads, in one-letter code: Interleukin-18 receptor 1 (541 aa).

The first 18 residues, 1 to 18, serve as a signal peptide directing secretion; that stretch reads MNCRELPLTLWVLISVST. Disulfide bonds link Cys-22/Cys-41 and Cys-43/Cys-81. Residues 22 to 329 are Extracellular-facing; it reads CTSRPHITVV…ADIPGHVFTR (308 aa). Ig-like C2-type domains are found at residues 33–121, 133–212, and 220–312; these read GEPF…SCFT, KKFF…DRSN, and PKLN…KSFI. 8 N-linked (GlcNAc...) asparagine glycosylation sites follow: Asn-91, Asn-102, Asn-150, Asn-197, Asn-203, Asn-236, Asn-255, and Asn-297. 2 disulfide bridges follow: Cys-119–Cys-158 and Cys-140–Cys-185. Cys-237 and Cys-298 are disulfide-bonded. Residues 330-350 form a helical membrane-spanning segment; it reads GMIIAVLILVAVVCLVTVCVI. The Cytoplasmic segment spans residues 351–541; that stretch reads YRVDLVLFYR…PEVLPVLSES (191 aa). Residues 373–520 enclose the TIR domain; it reads KTYDAFVSYL…RFWKNLLYLM (148 aa). The active site involves Glu-455.

It belongs to the interleukin-1 receptor family. As to quaternary structure, forms a ternary complex with IL18 and IL18RAP. Within this complex, IL18R1 is involved in ligand-binding and IL18RAP in signaling leading to NF-kappa-B and JNK activation. Interacts with SLC12A3 in peritoneal macrophages; this interaction is increased by IL18 treatment. In terms of processing, N-glycosylated. N-linked glycosyl chains contribute to ligand recognition and intra-receptor interactions required for formation of an active ternary receptor complex. Highly expressed in leukocytes, spleen, lung. Also expressed, but at lower levels, in liver, small intestine, colon, prostate, thymus, placenta, and heart. Specifically coexpressed with IL18R1 in Th1 cells.

It localises to the membrane. The catalysed reaction is NAD(+) + H2O = ADP-D-ribose + nicotinamide + H(+). Functionally, within the IL18 receptor complex, responsible for the binding of the pro-inflammatory cytokine IL18, but not IL1A nor IL1B. Involved in IL18-mediated IFNG synthesis from T-helper 1 (Th1) cells. Contributes to IL18-induced cytokine production, either independently of SLC12A3, or as a complex with SLC12A3. The polypeptide is Interleukin-18 receptor 1 (Homo sapiens (Human)).